Here is a 248-residue protein sequence, read N- to C-terminus: Indole-3-glycerol phosphate synthase (248 aa).

This sequence belongs to the TrpC family.

It catalyses the reaction 1-(2-carboxyphenylamino)-1-deoxy-D-ribulose 5-phosphate + H(+) = (1S,2R)-1-C-(indol-3-yl)glycerol 3-phosphate + CO2 + H2O. It participates in amino-acid biosynthesis; L-tryptophan biosynthesis; L-tryptophan from chorismate: step 4/5. The polypeptide is Indole-3-glycerol phosphate synthase (Sulfolobus acidocaldarius (strain ATCC 33909 / DSM 639 / JCM 8929 / NBRC 15157 / NCIMB 11770)).